Reading from the N-terminus, the 366-residue chain is Ferrochelatase (366 aa).

Positions 209 and 290 each coordinate Fe cation.

Belongs to the ferrochelatase family.

It is found in the cytoplasm. It catalyses the reaction heme b + 2 H(+) = protoporphyrin IX + Fe(2+). It functions in the pathway porphyrin-containing compound metabolism; protoheme biosynthesis; protoheme from protoporphyrin-IX: step 1/1. In terms of biological role, catalyzes the ferrous insertion into protoporphyrin IX. This chain is Ferrochelatase, found in Teredinibacter turnerae (strain ATCC 39867 / T7901).